The chain runs to 178 residues: Ribosome maturation factor RimM (178 aa).

Positions 101–178 (DGEYYWYQLQ…EMQVDWDADF (78 aa)) constitute a PRC barrel domain.

Belongs to the RimM family. In terms of assembly, binds ribosomal protein uS19.

Its subcellular location is the cytoplasm. Functionally, an accessory protein needed during the final step in the assembly of 30S ribosomal subunit, possibly for assembly of the head region. Essential for efficient processing of 16S rRNA. May be needed both before and after RbfA during the maturation of 16S rRNA. It has affinity for free ribosomal 30S subunits but not for 70S ribosomes. The protein is Ribosome maturation factor RimM of Stutzerimonas stutzeri (strain A1501) (Pseudomonas stutzeri).